Reading from the N-terminus, the 452-residue chain is Isocitrate dehydrogenase [NADP], mitochondrial (452 aa).

Residues 1 to 39 (MAGYLRVVRSLCRASGSRPAWAPAALTAPTSQEQPRRHY) constitute a mitochondrion transit peptide. 4 positions are modified to N6-acetyllysine: K45, K48, K67, and K69. N6-acetyllysine; alternate occurs at positions 80 and 106. An N6-succinyllysine; alternate mark is found at K80 and K106. NADP(+)-binding positions include 115 to 117 (TIT) and R122. T117 provides a ligand contact to D-threo-isocitrate. D-threo-isocitrate is bound by residues 134-140 (SPNGTIR) and R149. The residue at position 155 (K155) is an N6-acetyllysine. N6-acetyllysine; alternate is present on K166. N6-succinyllysine; alternate is present on K166. R172 is a D-threo-isocitrate binding site. K180 and K193 each carry N6-acetyllysine; alternate. 2 positions are modified to N6-succinyllysine; alternate: K180 and K193. The residue at position 199 (K199) is an N6-acetyllysine. K256 carries the post-translational modification N6-acetyllysine; alternate. At K256 the chain carries N6-succinyllysine; alternate. K263, K272, K275, and K280 each carry N6-acetyllysine. K282 is subject to N6-acetyllysine; alternate. The residue at position 282 (K282) is an N6-succinyllysine; alternate. D291 lines the Mn(2+) pocket. K299 contacts NADP(+). Residue D314 participates in Mn(2+) binding. Residues 349-354 (GTVTRH) and N367 each bind NADP(+). Position 384 is an N6-acetyllysine; alternate (K384). Position 384 is an N6-succinyllysine; alternate (K384). N6-acetyllysine is present on residues K400, K413, and K442.

This sequence belongs to the isocitrate and isopropylmalate dehydrogenases family. Homodimer. Requires Mg(2+) as cofactor. It depends on Mn(2+) as a cofactor. Post-translationally, acetylation at Lys-413 dramatically reduces catalytic activity. Deacetylated by SIRT3.

The protein localises to the mitochondrion. The enzyme catalyses D-threo-isocitrate + NADP(+) = 2-oxoglutarate + CO2 + NADPH. Plays a role in intermediary metabolism and energy production. It may tightly associate or interact with the pyruvate dehydrogenase complex. This is Isocitrate dehydrogenase [NADP], mitochondrial (IDH2) from Homo sapiens (Human).